The sequence spans 222 residues: MEYNRQPCPIRIVEDCGCAFMMGTIGGSLFEFLKGFRNAPTGLQRRLYGGIDLVKMRTPSIAGSFAVWGATFSTVDCALVHYRQREDAWNSILSGAATGGILAARNGIRAMANSALVGCLVLAMIEGAGAAVATINAADKGAGIVIKPQRAQWEAILETIDPKRASSTQDFALAEFERVLDKCRASREPNLLQDIPVKSHERDSKQKPFYSLLDLVKLSQMF.

The next 3 helical transmembrane spans lie at 16 to 36 (CGCA…LKGF), 60 to 80 (SIAG…CALV), and 115 to 135 (ALVG…VATI).

The protein belongs to the Tim17/Tim22/Tim23 family. As to quaternary structure, component of the TIM23 complex at least composed of Tim23, Tim17 (Tim17a1, Tim17a2 or Tim17b1) and a Tim50. The complex interacts with the Tim44 component of the PAM complex.

The protein localises to the mitochondrion inner membrane. Essential component of the TIM23 complex, a complex that mediates the translocation of transit peptide-containing proteins across the mitochondrial inner membrane. This Drosophila melanogaster (Fruit fly) protein is Probable mitochondrial import inner membrane translocase subunit Tim17 3 (Tim17a1).